The following is a 231-amino-acid chain: Endonuclease NucS (231 aa).

This sequence belongs to the NucS endonuclease family.

The protein resides in the cytoplasm. Its function is as follows. Cleaves both 3' and 5' ssDNA extremities of branched DNA structures. The protein is Endonuclease NucS of Micrococcus luteus (strain ATCC 4698 / DSM 20030 / JCM 1464 / CCM 169 / CCUG 5858 / IAM 1056 / NBRC 3333 / NCIMB 9278 / NCTC 2665 / VKM Ac-2230) (Micrococcus lysodeikticus).